The following is an 84-amino-acid chain: U1-theraphotoxin-Hs1a (84 aa).

An N-terminal signal peptide occupies residues 1-22 (MKVTLIAILTCAAVLVLHTTAA). A propeptide spanning residues 23 to 48 (EELEESQLMEVGMPDTELAAVDEERL) is cleaved from the precursor. Cystine bridges form between Cys-51/Cys-65, Cys-55/Cys-76, and Cys-70/Cys-81.

The protein belongs to the neurotoxin 12 (Hwtx-2) family. 02 (Hwtx-2) subfamily. In terms of tissue distribution, expressed by the venom gland.

It is found in the secreted. Blocks neuromuscular transmission. Acts cooperatively to potentiate the activity of huwentoxin-I. Paralyzes locusts and kills mice following intracerebroventricular injection. In Cyriopagopus schmidti (Chinese bird spider), this protein is U1-theraphotoxin-Hs1a.